Reading from the N-terminus, the 322-residue chain is ADP,ATP carrier protein (322 aa).

Solcar repeat units follow at residues 25–118, 130–222, and 230–316; these read STFF…FKKM, KWFA…LKPV, and GNFL…VQLL. The next 5 membrane-spanning stretches (helical) occupy residues 27–54, 95–119, 128–148, 198–219, and 233–253; these read FFFD…VKLL, TANV…KKMF, YAKW…ASLL, FGPS…YDTL, and LASF…SYPL. Arg-100 and Lys-112 together coordinate ADP. Arg-257 is a binding site for ADP. The segment at 257 to 262 is important for transport activity; it reads RRRMMM. The short motif at 257–262 is the Nucleotide carrier signature motif element; the sequence is RRRMMM. The helical transmembrane segment at 293-313 threads the bilayer; that stretch reads AGANILRGVAGAGVLSIYDQV.

The protein belongs to the mitochondrial carrier (TC 2.A.29) family. As to quaternary structure, monomer.

Its subcellular location is the mitochondrion inner membrane. It catalyses the reaction ADP(in) + ATP(out) = ADP(out) + ATP(in). Its activity is regulated as follows. The matrix-open state (m-state) is inhibited by the membrane-permeable bongkrekic acid (BKA). The cytoplasmic-open state (c-state) is inhibited by the membrane-impermeable toxic inhibitor carboxyatractyloside (CATR). In terms of biological role, ADP:ATP antiporter that mediates import of ADP into the mitochondrial matrix for ATP synthesis, and export of ATP out to fuel the cell. Cycles between the cytoplasmic-open state (c-state) and the matrix-open state (m-state): operates by the alternating access mechanism with a single substrate-binding site intermittently exposed to either the cytosolic (c-state) or matrix (m-state) side of the inner mitochondrial membrane. The polypeptide is ADP,ATP carrier protein (anc1) (Schizosaccharomyces pombe (strain 972 / ATCC 24843) (Fission yeast)).